The chain runs to 155 residues: Transcriptional regulator MraZ (155 aa).

2 consecutive SpoVT-AbrB domains span residues 15–62 (TYEN…GMDR) and 93–136 (SEEL…NPTA).

It belongs to the MraZ family. Forms oligomers.

The protein localises to the cytoplasm. The protein resides in the nucleoid. This chain is Transcriptional regulator MraZ, found in Rhodospirillum rubrum (strain ATCC 11170 / ATH 1.1.1 / DSM 467 / LMG 4362 / NCIMB 8255 / S1).